A 171-amino-acid chain; its full sequence is Alpha-amylase/trypsin inhibitor CMd (171 aa).

The first 24 residues, 1–24 (MACKSSRSLLLLATVMVSVFAAAA), serve as a signal peptide directing secretion.

Belongs to the protease inhibitor I6 (cereal trypsin/alpha-amylase inhibitor) family. As to quaternary structure, heterotetramer of one CMa, one CMb and two CMd chains. Post-translationally, five disulfide bonds, which are essential for the inhibitor activity, are probably present. Endosperm.

It is found in the secreted. Its function is as follows. Part of a complex with inhibitory activity, but CMd is inactive as a separate subunit. The sequence is that of Alpha-amylase/trypsin inhibitor CMd (IAT3) from Hordeum vulgare (Barley).